An 84-amino-acid chain; its full sequence is Putative membrane protein insertion efficiency factor (84 aa).

This sequence belongs to the UPF0161 family.

It localises to the cell inner membrane. Could be involved in insertion of integral membrane proteins into the membrane. This Shewanella denitrificans (strain OS217 / ATCC BAA-1090 / DSM 15013) protein is Putative membrane protein insertion efficiency factor.